The following is a 692-amino-acid chain: MALLLVSLLAFLGSGSGCHHWLCHCSNRVFLCQDSKVTEIPPDLPRNAIELRFVLTKLRVIPKGSFSGFGDLEKIEISQNDVLEVIEADVFSNLPNLHEIRIEKANNLLYINPEAFQNLPSLRYLLISNTGIKHLPAFHKIQSLQKVLLDIQDNINIHIIARNSFMGLSFESVILWLNKNGIQEIHNCAFNGTQLDELNLSDNNNLEELPDDVFQGASGPVVLDISRTKVYSLPNHGLENLKKLRARSTYRLKKLPSLDKFVMLIEASLTYPSHCCAFANWRRQTSELHPICNKSISRQDIDDMTQPGDQRVSLVDDEPSYGKGSDMLYSEFDYDLCNEFVDVTCSPKPDAFNPCEDIMGYNILRVLIWFISILAITGNTTVLVVLTTSQYKLTVPRFLMCNLAFADLCIGIYLLLIASVDIHTKSQYHNYAIDWQTGAGCDAAGFFTVFASELSVYTLAAITLERWHTITHAMQLECKVQLCHAASIMVLGWAFAFAAALFPIFGISSYMKVSICLPMDIDSPLSQLYVMALLVLNALAFVVICGCYTHIYLTVRNPNIVSSSRDTKIAKRMATLIFTDFLCMAPILFFAISASLKVPLITVSKAKILLVLFYPINSCANPFLYAIFTKNFRRDFFVLMSKFGCYEVQAQIYKTETSSITHNFHSRKNPCSSAPRVTNSYVLVPLNHSVQN.

An N-terminal signal peptide occupies residues 1–17; that stretch reads MALLLVSLLAFLGSGSG. 2 disulfide bridges follow: cysteine 18–cysteine 25 and cysteine 23–cysteine 32. One can recognise an LRRNT domain in the interval 18 to 46; that stretch reads CHHWLCHCSNRVFLCQDSKVTEIPPDLPR. The Extracellular segment spans residues 18 to 365; that stretch reads CHHWLCHCSN…EDIMGYNILR (348 aa). LRR repeat units lie at residues 49 to 72, 73 to 97, 98 to 118, 119 to 143, 144 to 169, 170 to 192, 193 to 216, 217 to 240, and 241 to 259; these read IELRFVLTKLRVIPKGSFSGFGDL, EKIEISQNDVLEVIEADVFSNLPNL, HEIRIEKANNLLYINPEAFQN, LPSLRYLLISNTGIKHLPAFHKIQS, LQKVLLDIQDNINIHIIARNSFMGLS, FESVILWLNKNGIQEIHNCAFNG, TQLDELNLSDNNNLEELPDDVFQG, ASGPVVLDISRTKVYSLPNHGLEN, and LKKLRARSTYRLKKLPSLD. Residues asparagine 191 and asparagine 199 are each glycosylated (N-linked (GlcNAc...) asparagine). 4 cysteine pairs are disulfide-bonded: cysteine 275/cysteine 345, cysteine 276/cysteine 292, cysteine 276/cysteine 355, and cysteine 292/cysteine 337. Asparagine 293 is a glycosylation site (N-linked (GlcNAc...) asparagine). Tyrosine 334 bears the Sulfotyrosine mark. Residues 366 to 386 form a helical membrane-spanning segment; sequence VLIWFISILAITGNTTVLVVL. Residues 387–397 are Cytoplasmic-facing; sequence TTSQYKLTVPR. Residues 398–420 traverse the membrane as a helical segment; the sequence is FLMCNLAFADLCIGIYLLLIASV. The Extracellular portion of the chain corresponds to 421–442; it reads DIHTKSQYHNYAIDWQTGAGCD. Cysteine 441 and cysteine 516 form a disulfide bridge. Residues 443–464 form a helical membrane-spanning segment; that stretch reads AAGFFTVFASELSVYTLAAITL. Residues 465–484 lie on the Cytoplasmic side of the membrane; the sequence is ERWHTITHAMQLECKVQLCH. A helical membrane pass occupies residues 485–507; that stretch reads AASIMVLGWAFAFAAALFPIFGI. The Extracellular segment spans residues 508 to 527; the sequence is SSYMKVSICLPMDIDSPLSQ. A helical membrane pass occupies residues 528–549; sequence LYVMALLVLNALAFVVICGCYT. The Cytoplasmic segment spans residues 550-572; that stretch reads HIYLTVRNPNIVSSSRDTKIAKR. Residues 573–596 form a helical membrane-spanning segment; it reads MATLIFTDFLCMAPILFFAISASL. Topologically, residues 597–607 are extracellular; sequence KVPLITVSKAK. A helical transmembrane segment spans residues 608–629; it reads ILLVLFYPINSCANPFLYAIFT. The Cytoplasmic segment spans residues 630-692; it reads KNFRRDFFVL…LVPLNHSVQN (63 aa).

Belongs to the G-protein coupled receptor 1 family. FSH/LSH/TSH subfamily. As to quaternary structure, homotrimer. Functions as a homotrimer binding the FSH hormone heterodimer composed of CGA and FSHB. Interacts with ARRB2. Interacts with APPL2; interaction is independent of follicle stimulating hormone stimulation. N-glycosylated; indirectly required for FSH-binding, possibly via a conformational change that allows high affinity binding of hormone. Post-translationally, sulfated.

The protein localises to the cell membrane. Its function is as follows. G protein-coupled receptor for follitropin, the follicle-stimulating hormone. Through cAMP production activates the downstream PI3K-AKT and ERK1/ERK2 signaling pathways. The polypeptide is Follicle-stimulating hormone receptor (Fshr) (Mus musculus (Mouse)).